Consider the following 116-residue polypeptide: Protein Wnt-5a (116 aa).

Ser1 carries O-palmitoleoyl serine; by PORCN lipidation. N-linked (GlcNAc...) asparagine glycans are attached at residues Asn69 and Asn83. An intrachain disulfide couples Cys82 to Cys97.

It belongs to the Wnt family. Palmitoleoylation is required for efficient binding to frizzled receptors. Depalmitoleoylation leads to Wnt signaling pathway inhibition.

The protein localises to the secreted. The protein resides in the extracellular space. It is found in the extracellular matrix. Ligand for members of the frizzled family of seven transmembrane receptors. Can activate or inhibit canonical Wnt signaling, depending on receptor context. Required during embryogenesis for extension of the primary anterior-posterior axis. This chain is Protein Wnt-5a (WNT5A), found in Anser caerulescens (Snow goose).